The primary structure comprises 1978 residues: MAARLLAPPGPDSFKPFTPESLANIERRIAESKLKKPPKADGSHREDDEDSKPKPNSDLEAGKSLPFIYGDIPQGLVAVPLEDFDPYYLTQKTFVVLNRGKTLFRFSATPALYILSPFNLIRRIAIKILIHSVFSMIIMCTILTNCVFMTFSNPPEWSKNVEYTFTGIYTFESLVKIIARGFCIDGFTFLRDPWNWLDFSVIMMAYVTEFVDLGNVSALRTFRVLRALKTISVIPGLKTIVGALIQSVKKLSDVMILTVFCLSVFALIGLQLFMGNLRNKCVVWPINFNESYLENGTRGFDWEEYINNKTNFYMVPGMLEPLLCGNSSDAGQCPEGFQCMKAGRNPNYGYTSFDTFSWAFLALFRLMTQDYWENLYQLTLRAAGKTYMIFFVLVIFVGSFYLVNLILAVVAMAYEEQNQATLEEAEQKEAEFKAMLEQLKKQQEEAQAAAMATSAGTVSEDAIEEEGEDGVGSPRSSSELSKLSSKSAKERRNRRKKRKQKELSEGEEKGDPEKVFKSESEDGMRRKAFRLPDNRIGRKFSIMNQSLLSIPGSPFLSRHNSKSSIFSFRGPGRFRDPGSENEFADDEHSTVEESEGRRDSLFIPIRARERRSSYSGYSGYSQCSRSSRIFPSLRRSVKRNSTVDCNGVVSLIGPGSHIGRLLPEATTEVEIKKKGPGSLLVSMDQLASYGRKDRINSIMSVVTNTLVEELEESQRKCPPCWYKFANTFLIWECHPYWIKLKEIVNLIVMDPFVDLAITICIVLNTLFMAMEHHPMTPQFEHVLAVGNLVFTGIFTAEMFLKLIAMDPYYYFQEGWNIFDGFIVSLSLMELSLADVEGLSVLRSFRLLRVFKLAKSWPTLNMLIKIIGNSVGALGNLTLVLAIIVFIFAVVGMQLFGKSYKECVCKINQECKLPRWHMNDFFHSFLIVFRVLCGEWIETMWDCMEVAGQAMCLIVFMMVMVIGNLVVLNLFLALLLSSFSADNLAATDDDGEMNNLQISVIRIKKGVAWTKVKVHAFMQAHFKQREADEVKPLDELYEKKANCIANHTGVDIHRNGDFQKNGNGTTSGIGSSVEKYIIDEDHMSFINNPNLTVRVPIAVGESDFENLNTEDVSSESDPEGSKDKLDDTSSSEGSTIDIKPEVEEVPVEQPEEYLDPDACFTEGCVQRFKCCQVNIEEGLGKSWWILRKTCFLIVEHNWFETFIIFMILLSSGALAFEDIYIEQRKTIRTILEYADKVFTYIFILEMLLKWTAYGFVKFFTNAWCWLDFLIVAVSLVSLIANALGYSELGAIKSLRTLRALRPLRALSRFEGMRVVVNALVGAIPSIMNVLLVCLIFWLIFSIMGVNLFAGKYHYCFNETSEIRFEIDIVNNKTDCEKLMEGNSTEIRWKNVKINFDNVGAGYLALLQVATFKGWMDIMYAAVDSRKPDEQPDYEGNIYMYIYFVIFIIFGSFFTLNLFIGVIIDNFNQQKKKFGGQDIFMTEEQKKYYNAMKKLGSKKPQKPIPRPLNKIQGIVFDFVTQQAFDIVIMMLICLNMVTMMVETDTQSKQMENILYWINLVFVIFFTCECVLKMFALRHYYFTIGWNIFDFVVVILSIVGMFLADIIEKYFVSPTLFRVIRLARIGRILRLIKGAKGIRTLLFALMMSLPALFNIGLLLFLVMFIFSIFGMSNFAYVKHEAGIDDMFNFETFGNSMICLFQITTSAGWDGLLLPILNRPPDCSLDKEHPGSGFKGDCGNPSVGIFFFVSYIIISFLIVVNMYIAIILENFSVATEESADPLSEDDFETFYEIWEKFDPDATQFIEYCKLADFADALEHPLRVPKPNTIELIAMDLPMVSGDRIHCLDILFAFTKRVLGDSGELDILRQQMEERFVASNPSKVSYEPITTTLRRKQEEVSAVVLQRAYRGHLARRGFICRKMASNKLENGGTHRDKKESTPSTASLPSYDSVTKPDKEKQQRAEEGRRERAKRQKEVRESKC.

Disordered stretches follow at residues 1–20 (MAAR…FTPE) and 28–62 (RIAE…LEAG). Residues 1-132 (MAARLLAPPG…RIAIKILIHS (132 aa)) lie on the Cytoplasmic side of the membrane. Residues 28-61 (RIAESKLKKPPKADGSHREDDEDSKPKPNSDLEA) are compositionally biased toward basic and acidic residues. The I repeat unit spans residues 114–442 (ILSPFNLIRR…KAMLEQLKKQ (329 aa)). Residues 133 to 151 (VFSMIIMCTILTNCVFMTF) form a helical membrane-spanning segment. The Extracellular portion of the chain corresponds to 152–158 (SNPPEWS). Residues 159–179 (KNVEYTFTGIYTFESLVKIIA) traverse the membrane as a helical segment. Topologically, residues 180 to 193 (RGFCIDGFTFLRDP) are cytoplasmic. A helical membrane pass occupies residues 194–211 (WNWLDFSVIMMAYVTEFV). Over 212–217 (DLGNVS) the chain is Extracellular. N215 is a glycosylation site (N-linked (GlcNAc...) asparagine). Residues 218–234 (ALRTFRVLRALKTISVI) form a helical membrane-spanning segment. The Cytoplasmic portion of the chain corresponds to 235-253 (PGLKTIVGALIQSVKKLSD). Residues 254–273 (VMILTVFCLSVFALIGLQLF) traverse the membrane as a helical segment. The Extracellular segment spans residues 274-355 (MGNLRNKCVV…PNYGYTSFDT (82 aa)). Residues C281 and C333 are joined by a disulfide bond. N289, N295, N308, and N326 each carry an N-linked (GlcNAc...) asparagine glycan. Positions 356–380 (FSWAFLALFRLMTQDYWENLYQLTL) form an intramembrane region, pore-forming. E373 contributes to the Na(+) binding site. At 381–387 (RAAGKTY) the chain is on the extracellular side. A helical membrane pass occupies residues 388–408 (MIFFVLVIFVGSFYLVNLILA). The Cytoplasmic portion of the chain corresponds to 409 to 751 (VVAMAYEEQN…EIVNLIVMDP (343 aa)). Disordered stretches follow at residues 446–530 (AQAA…KAFR) and 576–597 (DPGS…SEGR). Positions 473-486 (SPRSSSELSKLSSK) are enriched in low complexity. Over residues 489–500 (KERRNRRKKRKQ) the composition is skewed to basic residues. Basic and acidic residues-rich tracts occupy residues 501 to 530 (KELS…KAFR) and 586 to 597 (DEHSTVEESEGR). 2 positions are modified to phosphoserine: S518 and S520. The II repeat unit spans residues 733–1005 (CHPYWIKLKE…QISVIRIKKG (273 aa)). The helical transmembrane segment at 752-770 (FVDLAITICIVLNTLFMAM) threads the bilayer. Over 771 to 781 (EHHPMTPQFEH) the chain is Extracellular. The helical transmembrane segment at 782 to 801 (VLAVGNLVFTGIFTAEMFLK) threads the bilayer. At 802–815 (LIAMDPYYYFQEGW) the chain is on the cytoplasmic side. Residues 816-835 (NIFDGFIVSLSLMELSLADV) traverse the membrane as a helical segment. The Extracellular portion of the chain corresponds to 836–837 (EG). Residues 838–855 (LSVLRSFRLLRVFKLAKS) traverse the membrane as a helical segment. The Cytoplasmic portion of the chain corresponds to 856–871 (WPTLNMLIKIIGNSVG). Residues 872–890 (ALGNLTLVLAIIVFIFAVV) form a helical membrane-spanning segment. Residues 891-919 (GMQLFGKSYKECVCKINQECKLPRWHMND) lie on the Extracellular side of the membrane. The cysteines at positions 904 and 910 are disulfide-linked. The segment at residues 920-940 (FFHSFLIVFRVLCGEWIETMW) is an intramembrane region (pore-forming). Residues E934 and E937 each coordinate Na(+). The Extracellular portion of the chain corresponds to 941-953 (DCMEVAGQAMCLI). C942 and C951 are joined by a disulfide. The chain crosses the membrane as a helical span at residues 954–974 (VFMMVMVIGNLVVLNLFLALL). The Cytoplasmic portion of the chain corresponds to 975 to 1197 (LSSFSADNLA…TCFLIVEHNW (223 aa)). Positions 1105–1146 (NLNTEDVSSESDPEGSKDKLDDTSSSEGSTIDIKPEVEEVPV) are disordered. The stretch at 1178-1493 (LGKSWWILRK…KKYYNAMKKL (316 aa)) is one III repeat. Residues 1198–1215 (FETFIIFMILLSSGALAF) form a helical membrane-spanning segment. Topologically, residues 1216–1228 (EDIYIEQRKTIRT) are extracellular. The helical transmembrane segment at 1229 to 1247 (ILEYADKVFTYIFILEMLL) threads the bilayer. At 1248-1261 (KWTAYGFVKFFTNA) the chain is on the cytoplasmic side. The helical transmembrane segment at 1262–1280 (WCWLDFLIVAVSLVSLIAN) threads the bilayer. Over 1281 to 1288 (ALGYSELG) the chain is Extracellular. Residues 1289-1307 (AIKSLRTLRALRPLRALSR) form a helical membrane-spanning segment. Residues 1308–1324 (FEGMRVVVNALVGAIPS) lie on the Cytoplasmic side of the membrane. Residues 1325–1344 (IMNVLLVCLIFWLIFSIMGV) traverse the membrane as a helical segment. Residues 1345–1397 (NLFAGKYHYCFNETSEIRFEIDIVNNKTDCEKLMEGNSTEIRWKNVKINFDNV) lie on the Extracellular side of the membrane. C1354 and C1374 are disulfide-bonded. 3 N-linked (GlcNAc...) asparagine glycosylation sites follow: N1356, N1370, and N1381. Residues 1398-1419 (GAGYLALLQVATFKGWMDIMYA) constitute an intramembrane region (pore-forming). Residues 1420-1436 (AVDSRKPDEQPDYEGNI) are Extracellular-facing. A helical transmembrane segment spans residues 1437–1458 (YMYIYFVIFIIFGSFFTLNLFI). The Cytoplasmic portion of the chain corresponds to 1459–1521 (GVIIDNFNQQ…IVFDFVTQQA (63 aa)). Residue S1495 is modified to Phosphoserine; by PKC. The IV repeat unit spans residues 1502–1799 (IPRPLNKIQG…WEKFDPDATQ (298 aa)). The helical transmembrane segment at 1522–1539 (FDIVIMMLICLNMVTMMV) threads the bilayer. At 1540 to 1550 (ETDTQSKQMEN) the chain is on the extracellular side. The helical transmembrane segment at 1551-1569 (ILYWINLVFVIFFTCECVL) threads the bilayer. The Cytoplasmic portion of the chain corresponds to 1570–1581 (KMFALRHYYFTI). The helical transmembrane segment at 1582-1599 (GWNIFDFVVVILSIVGMF) threads the bilayer. Residues 1600–1612 (LADIIEKYFVSPT) are Extracellular-facing. The helical transmembrane segment at 1613-1629 (LFRVIRLARIGRILRLI) threads the bilayer. The Cytoplasmic portion of the chain corresponds to 1630 to 1648 (KGAKGIRTLLFALMMSLPA). Residues 1649–1666 (LFNIGLLLFLVMFIFSIF) traverse the membrane as a helical segment. At 1667 to 1688 (GMSNFAYVKHEAGIDDMFNFET) the chain is on the extracellular side. The segment at residues 1689–1711 (FGNSMICLFQITTSAGWDGLLLP) is an intramembrane region (pore-forming). The Extracellular segment spans residues 1712 to 1740 (ILNRPPDCSLDKEHPGSGFKGDCGNPSVG). The cysteines at positions 1719 and 1734 are disulfide-linked. The helical transmembrane segment at 1741–1763 (IFFFVSYIIISFLIVVNMYIAII) threads the bilayer. The Cytoplasmic portion of the chain corresponds to 1764–1978 (LENFSVATEE…RQKEVRESKC (215 aa)). An IQ domain is found at 1893–1922 (EEVSAVVLQRAYRGHLARRGFICRKMASNK). A disordered region spans residues 1923–1978 (LENGGTHRDKKESTPSTASLPSYDSVTKPDKEKQQRAEEGRRERAKRQKEVRESKC). Residues 1936–1947 (TPSTASLPSYDS) are compositionally biased toward polar residues. Over residues 1949–1978 (TKPDKEKQQRAEEGRRERAKRQKEVRESKC) the composition is skewed to basic and acidic residues.

Belongs to the sodium channel (TC 1.A.1.10) family. Nav1.6/SCN8A subfamily. In terms of assembly, the voltage-sensitive sodium channel consists of an ion-conducting pore-forming alpha subunit regulated by one or more beta-1 (SCN1B), beta-2 (SCN2B), beta-3 (SCN3B) and/or beta-4 (SCN4B) subunits. Beta-1 (SCN1B) and beta-3 (SCN3B) are non-covalently associated with alpha, while beta-2 (SCN2B) and beta-4 (SCN4B) are covalently linked by disulfide bonds. Interacts with NEDD4 and NEDD4L. Interacts with FGF13. Interacts with FGF14, GBG3, GBB2 and SCN1B. Interacts with TMEM233. Interacts with the conotoxin GVIIJ. Interacts with CALM1; the interaction modulates the inactivation rate of SCN8A. In terms of processing, may be ubiquitinated by NEDD4L; which would promote its endocytosis. Phosphorylation at Ser-1495 by PKC in a highly conserved cytoplasmic loop slows inactivation of the sodium channel and reduces peak sodium currents. Isoform 1 is highly expressed in brain, moderately in spinal cord, and at low levels in dorsal root ganglia, nodose ganglia and superior cervical ganglia. Not detected in sciatic nerve and non-neuronal tissues. Isoform 2 is hardly detectable, if at all, in brain, expressed at low levels in spinal cord and at highest levels in dorsal root ganglia.

It localises to the cell membrane. It is found in the cell projection. The protein resides in the axon. It catalyses the reaction Na(+)(in) = Na(+)(out). In terms of biological role, pore-forming subunit of a voltage-gated sodium channel complex assuming opened or closed conformations in response to the voltage difference across membranes and through which sodium ions selectively pass along their electrochemical gradient. Contributes to neuronal excitability by regulating action potential threshold and propagation. The polypeptide is Sodium channel protein type 8 subunit alpha (Rattus norvegicus (Rat)).